Here is a 667-residue protein sequence, read N- to C-terminus: Single-minded homolog 2 (667 aa).

Residues 1–53 (MKEKSKNAAKTRREKENGEFYELAKLLPLPSAITSQLDKASIIRLTTSYLKMR) enclose the bHLH domain. PAS domains lie at 77 to 149 (AKEL…LHHH) and 218 to 288 (PPSA…LVKG). Residues 292–335 (TKYYRLLSKRGGWVWVQSYATVVHNSRSSRPHCIVSVNYVLTEI) form the PAC domain. One can recognise a Single-minded C-terminal domain in the interval 336 to 667 (EYKELQLSLE…GASVIITNGR (332 aa)). Disordered regions lie at residues 356-389 (WRTALSTSQETRKLVKPKNTKMKTKLRTNPYPPQ), 409-428 (ASPPASAAAPPELQPHSESS), and 500-520 (SSSSPAKNPPEPPANTARHSL). The Nuclear localization signal signature appears at 367–386 (RKLVKPKNTKMKTKLRTNPY). Basic residues predominate over residues 369–381 (LVKPKNTKMKTKL). A compositionally biased stretch (low complexity) spans 409–419 (ASPPASAAAPP).

As to quaternary structure, efficient DNA binding requires dimerization with another bHLH protein. Heterodimer of SIM2 and ARNT.

The protein resides in the nucleus. Transcription factor that may be a master gene of CNS development in cooperation with Arnt. It may have pleiotropic effects in the tissues expressed during development. The protein is Single-minded homolog 2 (SIM2) of Homo sapiens (Human).